The following is a 192-amino-acid chain: Glutaredoxin-C9 (192 aa).

Positions 89-191 constitute a Glutaredoxin domain; it reads YERVARMASG…PLLKQAGALW (103 aa). Cys-109 and Cys-112 are oxidised to a cystine. A Responsive for interaction with TGA factors motif is present at residues 189–192; it reads ALWL.

The protein belongs to the glutaredoxin family. CC-type subfamily.

It is found in the cytoplasm. Its subcellular location is the nucleus. In terms of biological role, has a glutathione-disulfide oxidoreductase activity in the presence of NADPH and glutathione reductase. Reduces low molecular weight disulfides and proteins. This chain is Glutaredoxin-C9 (GRXC9), found in Oryza sativa subsp. japonica (Rice).